Consider the following 1770-residue polypeptide: Probable outer membrane protein PmpC (1770 aa).

An N-terminal signal peptide occupies residues 1-20; it reads MKFMSATAVFAAALSSVTEA. Disordered regions lie at residues 73-109, 264-311, 481-505, 611-818, and 1271-1329; these read LPRKHLSSSSEASPTTEGVSSSSSGETDEKTEEELDN, EDTL…GKGG, PAAPSLTEAESDQTDQTETSDTNSD, ESTP…STTE, and LRII…TSRT. The span at 85-97 shows a compositional bias: low complexity; sequence SPTTEGVSSSSSG. A compositionally biased stretch (polar residues) spans 268–285; it reads DSTPETEQTESNGNQDGS. Composition is skewed to low complexity over residues 294–303 and 496–505; these read SESPESTPSP and QTETSDTNSD. Composition is skewed to polar residues over residues 631 to 675 and 682 to 703; these read TEDP…TGNA and QDSTQSNEENTLPNSNIDQSNE. 2 stretches are compositionally biased toward low complexity: residues 719 to 748 and 762 to 802; these read ESVSSSSESGSSTPQDGGAASSGAPSGDQS and STDS…GDSA. Over residues 1303–1319 the composition is skewed to polar residues; the sequence is NNDASNQGESANGSSSP. The 294-residue stretch at 1477-1770 folds into the Autotransporter domain; that stretch reads EEVSYNNLWI…MMNCGARMTF (294 aa).

Belongs to the PMP outer membrane protein family.

Its subcellular location is the secreted. The protein resides in the cell wall. It localises to the cell outer membrane. The sequence is that of Probable outer membrane protein PmpC (pmpC) from Chlamydia trachomatis serovar D (strain ATCC VR-885 / DSM 19411 / UW-3/Cx).